Consider the following 335-residue polypeptide: tRNA N6-adenosine threonylcarbamoyltransferase (335 aa).

2 residues coordinate Fe cation: H110 and H114. Substrate-binding positions include 132 to 136 (LVSGG), D165, G178, and N271. Residue D299 coordinates Fe cation.

It belongs to the KAE1 / TsaD family. Fe(2+) serves as cofactor.

The protein resides in the cytoplasm. The catalysed reaction is L-threonylcarbamoyladenylate + adenosine(37) in tRNA = N(6)-L-threonylcarbamoyladenosine(37) in tRNA + AMP + H(+). Functionally, required for the formation of a threonylcarbamoyl group on adenosine at position 37 (t(6)A37) in tRNAs that read codons beginning with adenine. Is involved in the transfer of the threonylcarbamoyl moiety of threonylcarbamoyl-AMP (TC-AMP) to the N6 group of A37, together with TsaE and TsaB. TsaD likely plays a direct catalytic role in this reaction. The sequence is that of tRNA N6-adenosine threonylcarbamoyltransferase from Campylobacter jejuni subsp. jejuni serotype O:6 (strain 81116 / NCTC 11828).